Reading from the N-terminus, the 541-residue chain is Thioredoxin reductase (541 aa).

Residues 51–52, 71–74, 87–88, 92–96, Ala-161, Asp-357, and 364–366 each bind FAD; these read PG, DYVK, TC, GCVPK, and ELA. Residues Cys-88 and Cys-93 are joined by a disulfide bond. Residues 438 to 452 form a loop important for the interaction with TRX1 region; the sequence is HRQKHIRAQKDEYDL. His-509 is a binding site for FAD. Residue His-509 is the Proton acceptor of the active site. A disulfide bond links Cys-535 and Cys-540.

This sequence belongs to the class-I pyridine nucleotide-disulfide oxidoreductase family. Homodimer. FAD serves as cofactor.

It is found in the cytoplasm. The enzyme catalyses [thioredoxin]-dithiol + NADP(+) = [thioredoxin]-disulfide + NADPH + H(+). In terms of biological role, catalyzes the transfer of electrons from NADPH to thioredoxins TRX1, TRX2 and TRX3, which in turn act as reductants of disulfide containing proteins. Able to reduce nitroglutathione (GSNO), a compound involved in the transport of nitric oxide (NO); however, TRX1 is more efficient in reducing GSNO. Has no catalytic activity towards oxidized glutathione (GSSG). This Plasmodium falciparum (isolate FCH-5) protein is Thioredoxin reductase.